The following is a 397-amino-acid chain: MEPRGTKRKAEKTEVAKTWNKLPRSLPSLRTQPSLYSGPFPFYRRPSELGCFSLDAQRQYHGDARALRYYSPPPINGPGPDFDLRDGYPDRYQPRDEEVRERLDHLLRWVLEHRNQLEGGPGWLAGATVTWRGHLTKLLTTPYERQEGWQLAASRFQGTLYLSEVETPAARAQRLARPPLLRELMYMGYKFEQYMCADKPGGSPDPSGEVNTNVAFCSVLRSRLGNHPLLFSGEVDCLNPQAPCTQPPSCYVELKTSKEMHSPGQWRSFYRHKLLKWWAQSFLPGVPYVVAGFRNPEGFVCSLKTFPTMEMFENVRNDQEGWNPSVCMNFCAAFLSFAQSTVVQDDPRLVHLFSWEPGGPVTVSVHRDAPYAFLPSWYVEAMTQDLPSLSKTPSPKD.

Substrate is bound by residues Arg-58, Glu-101, and 131–133; that span reads WRG. Position 192 (Glu-192) interacts with Mg(2+). Substrate contacts are provided by Cys-217 and Glu-234. Residues Glu-234, Asp-236, Glu-253, and Leu-254 each contribute to the Mg(2+) site. Substrate-binding residues include Lys-255 and Gln-280. Phosphothreonine is present on Thr-392. Phosphoserine is present on Ser-394.

The protein belongs to the DXO/Dom3Z family. It depends on Mg(2+) as a cofactor.

Its subcellular location is the nucleus. The enzyme catalyses a 5'-end triphospho-ribonucleoside in mRNA + H2O = a 5'-end phospho-ribonucleoside in mRNA + diphosphate + H(+). It catalyses the reaction a 5'-end NAD(+)-phospho-ribonucleoside in mRNA + H2O = a 5'-end phospho-ribonucleoside in mRNA + NAD(+) + H(+). The catalysed reaction is a 5'-end NAD(+)-phospho-ribonucleoside in snoRNA + H2O = a 5'-end phospho-ribonucleoside in snoRNA + NAD(+) + H(+). It carries out the reaction a 5'-end (N(7)-methyl 5'-triphosphoguanosine)-ribonucleoside-ribonucleotide in mRNA + H2O = a (N(7)-methyl 5'-triphosphoguanosine)-nucleoside + a 5'-end phospho-ribonucleoside in mRNA + H(+). The enzyme catalyses a 5'-end FAD-phospho-ribonucleoside in mRNA + H2O = a 5'-end phospho-ribonucleoside in mRNA + FAD + H(+). It catalyses the reaction a 5'-end CoA-ribonucleoside in mRNA + H2O = 3'-dephospho-CoA + a 5'-end phospho-ribonucleoside in mRNA + H(+). Decapping enzyme for NAD-capped RNAs: specifically hydrolyzes the nicotinamide adenine dinucleotide (NAD) cap from a subset of RNAs by removing the entire NAD moiety from the 5'-end of an NAD-capped RNA. The NAD-cap is present at the 5'-end of some RNAs and snoRNAs. In contrast to the canonical 5'-end N7 methylguanosine (m7G) cap, the NAD cap promotes mRNA decay. Preferentially acts on NAD-capped transcripts in response to environmental stress. Also acts as a non-canonical decapping enzyme that removes the entire cap structure of m7G capped or incompletely capped RNAs and mediates their subsequent degradation. Specifically degrades pre-mRNAs with a defective 5'-end m7G cap and is part of a pre-mRNA capping quality control. Has decapping activity toward incomplete 5'-end m7G cap mRNAs such as unmethylated 5'-end-capped RNA (cap0), while it has no activity toward 2'-O-ribose methylated m7G cap (cap1). In contrast to canonical decapping enzymes DCP2 and NUDT16, which cleave the cap within the triphosphate linkage, the decapping activity releases the entire cap structure GpppN and a 5'-end monophosphate RNA. Also has 5'-3' exoribonuclease activities: The 5'-end monophosphate RNA is then degraded by the 5'-3' exoribonuclease activity, enabling this enzyme to decap and degrade incompletely capped mRNAs. Also possesses RNA 5'-pyrophosphohydrolase activity by hydrolyzing the 5'-end triphosphate to release pyrophosphates. Exhibits decapping activity towards FAD-capped RNAs. Exhibits decapping activity towards dpCoA-capped RNAs in vitro. The polypeptide is Decapping and exoribonuclease protein (Rattus norvegicus (Rat)).